Consider the following 218-residue polypeptide: Large ribosomal subunit protein mL54 (218 aa).

It belongs to the mitochondrion-specific ribosomal protein mL54 family. In terms of assembly, component of the mitochondrial large ribosomal subunit (mt-LSU). Mature N.crassa 74S mitochondrial ribosomes consist of a small (37S) and a large (54S) subunit. The 37S small subunit contains a 16S ribosomal RNA (16S mt-rRNA) and 32 different proteins. The 54S large subunit contains a 23S rRNA (23S mt-rRNA) and 42 different proteins.

The protein resides in the mitochondrion. Functionally, component of the mitochondrial ribosome (mitoribosome), a dedicated translation machinery responsible for the synthesis of mitochondrial genome-encoded proteins, including at least some of the essential transmembrane subunits of the mitochondrial respiratory chain. The mitoribosomes are attached to the mitochondrial inner membrane and translation products are cotranslationally integrated into the membrane. This Neurospora crassa (strain ATCC 24698 / 74-OR23-1A / CBS 708.71 / DSM 1257 / FGSC 987) protein is Large ribosomal subunit protein mL54 (mrpl37).